Here is a 97-residue protein sequence, read N- to C-terminus: Protein ParC (97 aa).

The protein is Protein ParC (parC) of Escherichia coli.